Reading from the N-terminus, the 614-residue chain is Two-component response regulator ORR33 (614 aa).

Positions 14–139 constitute a Response regulatory domain; it reads RVMIIDDDAK…VMARLWRVVA (126 aa). Position 67 is a 4-aspartylphosphate (Asp-67). Residues 193-220 are disordered; that stretch reads RQLTINVVDDGNRGSGSGGGGGGGADAN. Over residues 205-217 the composition is skewed to gly residues; it reads RGSGSGGGGGGGA.

This sequence belongs to the ARR family. Type-B subfamily. In terms of processing, two-component system major event consists of a His-to-Asp phosphorelay between a sensor histidine kinase (HK) and a response regulator (RR). In plants, the His-to-Asp phosphorelay involves an additional intermediate named Histidine-containing phosphotransfer protein (HPt). This multistep phosphorelay consists of a His-Asp-His-Asp sequential transfer of a phosphate group between first a His and an Asp of the HK protein, followed by the transfer to a conserved His of the HPt protein and finally the transfer to an Asp in the receiver domain of the RR protein.

In terms of biological role, functions as a response regulator involved in His-to-Asp phosphorelay signal transduction system. Phosphorylation of the Asp residue in the receiver domain activates the ability of the protein to promote the transcription of target genes. May directly activate some type-A response regulators in response to cytokinins. In Oryza sativa subsp. indica (Rice), this protein is Two-component response regulator ORR33.